A 245-amino-acid chain; its full sequence is 1-(5-phosphoribosyl)-5-[(5-phosphoribosylamino)methylideneamino] imidazole-4-carboxamide isomerase (245 aa).

The active-site Proton acceptor is D8. D130 (proton donor) is an active-site residue.

It belongs to the HisA/HisF family.

Its subcellular location is the cytoplasm. It catalyses the reaction 1-(5-phospho-beta-D-ribosyl)-5-[(5-phospho-beta-D-ribosylamino)methylideneamino]imidazole-4-carboxamide = 5-[(5-phospho-1-deoxy-D-ribulos-1-ylimino)methylamino]-1-(5-phospho-beta-D-ribosyl)imidazole-4-carboxamide. It participates in amino-acid biosynthesis; L-histidine biosynthesis; L-histidine from 5-phospho-alpha-D-ribose 1-diphosphate: step 4/9. The sequence is that of 1-(5-phosphoribosyl)-5-[(5-phosphoribosylamino)methylideneamino] imidazole-4-carboxamide isomerase from Pseudomonas aeruginosa (strain LESB58).